A 193-amino-acid chain; its full sequence is Xanthine phosphoribosyltransferase (193 aa).

Positions 20 and 27 each coordinate xanthine. Position 128-132 (128-132 (ANGQA)) interacts with 5-phospho-alpha-D-ribose 1-diphosphate. Position 156 (lysine 156) interacts with xanthine.

Belongs to the purine/pyrimidine phosphoribosyltransferase family. Xpt subfamily. In terms of assembly, homodimer.

Its subcellular location is the cytoplasm. It carries out the reaction XMP + diphosphate = xanthine + 5-phospho-alpha-D-ribose 1-diphosphate. It participates in purine metabolism; XMP biosynthesis via salvage pathway; XMP from xanthine: step 1/1. In terms of biological role, converts the preformed base xanthine, a product of nucleic acid breakdown, to xanthosine 5'-monophosphate (XMP), so it can be reused for RNA or DNA synthesis. The chain is Xanthine phosphoribosyltransferase from Streptococcus uberis (strain ATCC BAA-854 / 0140J).